Consider the following 428-residue polypeptide: Nucleotidyltransferase MB21D2 (428 aa).

The tract at residues 366–389 is disordered; the sequence is QRRGSTTSIPSPQSDGGDPNQPDD. Positions 368 to 379 are enriched in polar residues; the sequence is RGSTTSIPSPQS. T372 carries the post-translational modification Phosphothreonine. S373, S376, and S379 each carry phosphoserine.

Belongs to the mab-21 family.

Functionally, probable nucleotidyltransferase that catalyzes the formation of cyclic dinucleotide second messenger in response to some unknown stimulus. This Mus musculus (Mouse) protein is Nucleotidyltransferase MB21D2.